The following is a 53-amino-acid chain: Metallocarboxypeptidase inhibitor (53 aa).

3 disulfides stabilise this stretch: Cys9/Cys23, Cys15/Cys51, and Cys27/Cys38. Ala53 contributes to the Zn(2+) binding site.

In terms of assembly, monomer. Interacts (via C-terminus) with human CPA4.

Functionally, metallocarboxypeptidase inhibitor. Has an inhibitory effect on bovine CPA1 and CPB2, human CPA1, CPA2, CPA4, CPB1 and CPB2, and porcine CPB1. Does not inhibit D.melanogaster svr (carboxypeptidase D). Shows no activity against serine proteases subtilisin or bovine trypsin, cysteine protease papain, and aspartyl protease porcine pepsin. This is Metallocarboxypeptidase inhibitor from Nerita versicolor (Four-tooth nerite).